The primary structure comprises 494 residues: Cytochrome P450 2C44 (494 aa).

Positions Met1–Thr25 are cleaved as a signal peptide. The residue at position 131 (Ser131) is a Phosphoserine. Residues Lys253 and Lys379 each carry the N6-acetyllysine modification. Cys439 serves as a coordination point for heme.

This sequence belongs to the cytochrome P450 family. It depends on heme as a cofactor. In terms of tissue distribution, highly expressed in liver, particularly in hepatocytes and bile duct epithelial cells (at protein level). Expressed in nephron segments. Prominent expression is detected in proximal tubules at the corticomedullary junction (at protein level). Also expressed in renal cortical collecting duct. Lower expression levels are detected in adrenal glands.

It localises to the endoplasmic reticulum membrane. The protein localises to the microsome membrane. It catalyses the reaction (5Z,8Z,11Z,14Z)-eicosatetraenoate + reduced [NADPH--hemoprotein reductase] + O2 = (8R,9S)-epoxy-(5Z,11Z,14Z)-eicosatrienoate + oxidized [NADPH--hemoprotein reductase] + H2O + H(+). It carries out the reaction (5Z,8Z,11Z,14Z)-eicosatetraenoate + reduced [NADPH--hemoprotein reductase] + O2 = (11R,12S)-epoxy-(5Z,8Z,14Z)-eicosatrienoate + oxidized [NADPH--hemoprotein reductase] + H2O + H(+). The catalysed reaction is (5Z,8Z,11Z,14Z)-eicosatetraenoate + reduced [NADPH--hemoprotein reductase] + O2 = 14,15-epoxy-(5Z,8Z,11Z)-eicosatrienoate + oxidized [NADPH--hemoprotein reductase] + H2O + H(+). The enzyme catalyses (5Z,8Z,11Z,14Z,17Z)-eicosapentaenoate + reduced [NADPH--hemoprotein reductase] + O2 = 8,9-epoxy-(5Z,11Z,14Z,17Z)-eicosatetraenoate + oxidized [NADPH--hemoprotein reductase] + H2O + H(+). It catalyses the reaction (5Z,8Z,11Z,14Z,17Z)-eicosapentaenoate + reduced [NADPH--hemoprotein reductase] + O2 = 11,12-epoxy-(5Z,8Z,14Z,17Z)-eicosatetraenoate + oxidized [NADPH--hemoprotein reductase] + H2O + H(+). It carries out the reaction (5Z,8Z,11Z,14Z,17Z)-eicosapentaenoate + reduced [NADPH--hemoprotein reductase] + O2 = 14,15-epoxy-(5Z,8Z,11Z,17Z)-eicosatetraenoate + oxidized [NADPH--hemoprotein reductase] + H2O + H(+). The catalysed reaction is (5Z,8Z,11Z,14Z,17Z)-eicosapentaenoate + reduced [NADPH--hemoprotein reductase] + O2 = (17R,18S)-epoxy-(5Z,8Z,11Z,14Z)-eicosatetraenoate + oxidized [NADPH--hemoprotein reductase] + H2O + H(+). The enzyme catalyses (5Z,8Z,11Z,14Z,17Z)-eicosapentaenoate + reduced [NADPH--hemoprotein reductase] + O2 = (17S,18R)-epoxy-(5Z,8Z,11Z,14Z)-eicosatetraenoate + oxidized [NADPH--hemoprotein reductase] + H2O + H(+). It catalyses the reaction 20-hydroxy-(5Z,8Z,11Z,14Z)-eicosatetraenoate + reduced [NADPH--hemoprotein reductase] + O2 = 20-hydroxy-8,9-epoxy-(5Z,11Z,14Z)-eicosatrienoate + oxidized [NADPH--hemoprotein reductase] + H2O + H(+). Its pathway is lipid metabolism; arachidonate metabolism. Its function is as follows. A cytochrome P450 monooxygenase involved in polyunsaturated fatty acids (PUFAs) metabolism and signaling. Catalyzes preferentially the epoxidation of double bonds of PUFAs. Converts arachidonic acid (ARA, C20:4(n-6)) primarily to stereospecific products 8R,9S-epoxyeicosatrienoate (EET) and 11R,12S-EET. Plays a major role in the formation of EETs and hydroxy-EETs (HEETs) in kidney. Via EETs may inhibit the epithelial sodium channels (ENaCs) in nephron segments, preventing excessive sodium absorption during high dietary salt intake. Participates in the formation of anti-inflammatory hydroxyepoxyeicosatrienoic acids (HEETs) by converting 20-hydroxyeicosatetraenoic acid (20-HETE) to 20,8,9-HEET, an activator of PPARA. Metabolizes eicosapentaenoic acid (EPA, C20:5(n-3)) to epoxyeicosatetraenoic acid (EETeTr) regioisomers, 8,9-, 11,12-, 14,15-, and 17,18- EETeTr, preferentially producing 17R,18S enantiomer. Mechanistically, uses molecular oxygen inserting one oxygen atom into a substrate, and reducing the second into a water molecule, with two electrons provided by NADPH via cytochrome P450 reductase (CPR; NADPH-ferrihemoprotein reductase). The protein is Cytochrome P450 2C44 of Mus musculus (Mouse).